We begin with the raw amino-acid sequence, 309 residues long: Probable manganese-dependent inorganic pyrophosphatase (309 aa).

Mn(2+) contacts are provided by histidine 9, aspartate 13, aspartate 15, aspartate 75, histidine 97, and aspartate 149.

This sequence belongs to the PPase class C family. Mn(2+) serves as cofactor.

Its subcellular location is the cytoplasm. The catalysed reaction is diphosphate + H2O = 2 phosphate + H(+). This is Probable manganese-dependent inorganic pyrophosphatase from Bacillus cereus (strain ATCC 10987 / NRS 248).